The chain runs to 135 residues: Large ribosomal subunit protein uL16 (135 aa).

It belongs to the universal ribosomal protein uL16 family. Part of the 50S ribosomal subunit.

Binds 23S rRNA and is also seen to make contacts with the A and possibly P site tRNAs. This Desulfatibacillum aliphaticivorans protein is Large ribosomal subunit protein uL16.